A 276-amino-acid polypeptide reads, in one-letter code: Diaminopimelate epimerase (276 aa).

Asn-13, Gln-46, and Asn-66 together coordinate substrate. Cys-75 functions as the Proton donor in the catalytic mechanism. Substrate is bound by residues 76 to 77 (GN), Asn-159, Asn-192, and 210 to 211 (ER). Catalysis depends on Cys-219, which acts as the Proton acceptor. Residue 220–221 (GS) coordinates substrate.

Belongs to the diaminopimelate epimerase family. Homodimer.

It localises to the cytoplasm. It catalyses the reaction (2S,6S)-2,6-diaminopimelate = meso-2,6-diaminopimelate. The protein operates within amino-acid biosynthesis; L-lysine biosynthesis via DAP pathway; DL-2,6-diaminopimelate from LL-2,6-diaminopimelate: step 1/1. Functionally, catalyzes the stereoinversion of LL-2,6-diaminopimelate (L,L-DAP) to meso-diaminopimelate (meso-DAP), a precursor of L-lysine and an essential component of the bacterial peptidoglycan. In Vibrio campbellii (strain ATCC BAA-1116), this protein is Diaminopimelate epimerase.